The following is a 311-amino-acid chain: tRNA dimethylallyltransferase (311 aa).

10–17 (GPTASGKT) contributes to the ATP binding site. 12 to 17 (TASGKT) is a substrate binding site. 3 interaction with substrate tRNA regions span residues 35–38 (DSAL), 159–163 (QRINR), and 240–245 (RCVGYR).

The protein belongs to the IPP transferase family. Monomer. Mg(2+) serves as cofactor.

It carries out the reaction adenosine(37) in tRNA + dimethylallyl diphosphate = N(6)-dimethylallyladenosine(37) in tRNA + diphosphate. Functionally, catalyzes the transfer of a dimethylallyl group onto the adenine at position 37 in tRNAs that read codons beginning with uridine, leading to the formation of N6-(dimethylallyl)adenosine (i(6)A). This is tRNA dimethylallyltransferase from Haemophilus influenzae (strain PittEE).